The following is a 421-amino-acid chain: U-box domain-containing protein 25 (421 aa).

Positions 13 to 88 (QIPYHFRCPI…QEWCVANRSN (76 aa)) constitute a U-box domain.

It catalyses the reaction S-ubiquitinyl-[E2 ubiquitin-conjugating enzyme]-L-cysteine + [acceptor protein]-L-lysine = [E2 ubiquitin-conjugating enzyme]-L-cysteine + N(6)-ubiquitinyl-[acceptor protein]-L-lysine.. The protein operates within protein modification; protein ubiquitination. Functionally, functions as an E3 ubiquitin ligase. The chain is U-box domain-containing protein 25 (PUB25) from Arabidopsis thaliana (Mouse-ear cress).